A 138-amino-acid polypeptide reads, in one-letter code: ATP synthase epsilon chain (138 aa).

It belongs to the ATPase epsilon chain family. As to quaternary structure, F-type ATPases have 2 components, CF(1) - the catalytic core - and CF(0) - the membrane proton channel. CF(1) has five subunits: alpha(3), beta(3), gamma(1), delta(1), epsilon(1). CF(0) has three main subunits: a, b and c.

It localises to the cell inner membrane. Its function is as follows. Produces ATP from ADP in the presence of a proton gradient across the membrane. The sequence is that of ATP synthase epsilon chain from Cupriavidus necator (strain ATCC 17699 / DSM 428 / KCTC 22496 / NCIMB 10442 / H16 / Stanier 337) (Ralstonia eutropha).